The following is a 320-amino-acid chain: Iminosuccinate reductase (320 aa).

The active-site Proton donor/acceptor is the Lys67. NAD(+) is bound by residues Arg110, 137 to 138 (HQ), Asn159, Ser199, 219 to 222 (MGTD), Lys226, and Gly291.

It belongs to the ornithine cyclodeaminase/mu-crystallin family. BhcD subfamily.

It carries out the reaction L-aspartate + NAD(+) = iminosuccinate + NADH + H(+). In terms of biological role, imine reductase that catalyzes the NADH-dependent reduction of iminosuccinate to L-aspartate. Is essential for the growth of P.denitrificans in the presence of glycolate and glyoxylate since it functions in glyoxylate assimilation via the beta-hydroxyaspartate cycle (BHAC). Thereby BhcD regenerates the amino group donor for the first step of the BHAC. This is Iminosuccinate reductase from Paracoccus denitrificans (strain Pd 1222).